The primary structure comprises 341 residues: Endolytic peptidoglycan transglycosylase RlpA (341 aa).

The first 26 residues, 1-26, serve as a signal peptide directing secretion; it reads MSKRVRSSLILPAVCGLGLAAVLLSS. Residue Cys27 is the site of N-palmitoyl cysteine attachment. The S-diacylglycerol cysteine moiety is linked to residue Cys27. Residues 260–341 form the SPOR domain; it reads SLPADGLYLQ…LGQPTLVRPD (82 aa).

The protein belongs to the RlpA family.

Its subcellular location is the cell membrane. Functionally, lytic transglycosylase with a strong preference for naked glycan strands that lack stem peptides. Required for efficient separation of daughter cells and maintenance of rod shape. The sequence is that of Endolytic peptidoglycan transglycosylase RlpA from Pseudomonas aeruginosa (strain UCBPP-PA14).